Here is a 345-residue protein sequence, read N- to C-terminus: uncharacterized protein (345 aa).

Belongs to the transketolase family. The cofactor is thiamine diphosphate.

This is an uncharacterized protein from Sinorhizobium fredii (strain NBRC 101917 / NGR234).